A 787-amino-acid chain; its full sequence is Phenylalanine--tRNA ligase beta subunit (787 aa).

The tRNA-binding domain occupies Ala39 to Arg149. One can recognise a B5 domain in the interval Pro400 to Asp475. Positions 453, 459, 462, and 463 each coordinate Mg(2+). Residues Ser694–Arg786 form the FDX-ACB domain.

The protein belongs to the phenylalanyl-tRNA synthetase beta subunit family. Type 1 subfamily. Tetramer of two alpha and two beta subunits. Mg(2+) is required as a cofactor.

The protein localises to the cytoplasm. The enzyme catalyses tRNA(Phe) + L-phenylalanine + ATP = L-phenylalanyl-tRNA(Phe) + AMP + diphosphate + H(+). The protein is Phenylalanine--tRNA ligase beta subunit (pheT) of Neisseria meningitidis serogroup A / serotype 4A (strain DSM 15465 / Z2491).